The sequence spans 289 residues: tRNA pseudouridine synthase B (289 aa).

Asp-38 (nucleophile) is an active-site residue.

The protein belongs to the pseudouridine synthase TruB family. Type 1 subfamily.

The catalysed reaction is uridine(55) in tRNA = pseudouridine(55) in tRNA. Its function is as follows. Responsible for synthesis of pseudouridine from uracil-55 in the psi GC loop of transfer RNAs. The chain is tRNA pseudouridine synthase B from Clostridium acetobutylicum (strain ATCC 824 / DSM 792 / JCM 1419 / IAM 19013 / LMG 5710 / NBRC 13948 / NRRL B-527 / VKM B-1787 / 2291 / W).